Here is a 190-residue protein sequence, read N- to C-terminus: Endoribonuclease YbeY (190 aa).

Residues H147, H151, and H157 each contribute to the Zn(2+) site.

Belongs to the endoribonuclease YbeY family. Zn(2+) serves as cofactor.

It is found in the cytoplasm. Single strand-specific metallo-endoribonuclease involved in late-stage 70S ribosome quality control and in maturation of the 3' terminus of the 16S rRNA. This chain is Endoribonuclease YbeY, found in Nitrobacter winogradskyi (strain ATCC 25391 / DSM 10237 / CIP 104748 / NCIMB 11846 / Nb-255).